Here is a 443-residue protein sequence, read N- to C-terminus: MIIDILNSDSDPAGRNIRAAIDELLKNPPEGGFPLFDGNEVTFHTVSGRIIHAEKSAVNPDADLIIVVSRHSSVNPVPVLTVHPAGNFGIAGLGGNDRELGLTSPAWMKSILQNHAEFVPEGYRVSYEITHHGPTDFPVPFFFVEVGSTEKEWNDPAACIAAAKSVLYARPSPEIVPLIGFGGTHYAVRQTAIGLETKGAFGHMMHTRDVGSVSKEMVSQMIAKSCGVFAAHIDRKALSKQEISHIEGILAEVGLEEITEGDLRKMNAMSFSTWVAYRDLAALQAPGLKIFPHGRIFDGDPAVVELPSDLFSAAFLGYEEIFLAELDKMGNIFHTTGKGGRLMPTLLTSAKNRQKVSGDLIVLSVQQITRTQDSLVEGDQITIARRQFDPVLARTLGVPSGPLYGQLVAGKPVTLPDGRMITPDMVTKVVRTSIKIPGLENYS.

Belongs to the DtdA deacylase family. As to quaternary structure, monomer. Zn(2+) serves as cofactor.

The catalysed reaction is a D-aminoacyl-tRNA + H2O = a tRNA + a D-alpha-amino acid + H(+). It carries out the reaction glycyl-tRNA(Ala) + H2O = tRNA(Ala) + glycine + H(+). D-aminoacyl-tRNA deacylase with broad substrate specificity. By recycling D-aminoacyl-tRNA to D-amino acids and free tRNA molecules, this enzyme counteracts the toxicity associated with the formation of D-aminoacyl-tRNA entities in vivo. The chain is D-aminoacyl-tRNA deacylase from Methanocorpusculum labreanum (strain ATCC 43576 / DSM 4855 / Z).